Consider the following 254-residue polypeptide: Peptide methionine sulfoxide reductase A5 (254 aa).

An N-terminal signal peptide occupies residues 1-26 (MARGSAAAAIAGVVWVLLLLVGVASG).

Belongs to the MsrA Met sulfoxide reductase family.

The enzyme catalyses L-methionyl-[protein] + [thioredoxin]-disulfide + H2O = L-methionyl-(S)-S-oxide-[protein] + [thioredoxin]-dithiol. It catalyses the reaction [thioredoxin]-disulfide + L-methionine + H2O = L-methionine (S)-S-oxide + [thioredoxin]-dithiol. Functionally, catalyzes the reduction of methionine sulfoxide (MetSO) to methionine in proteins. Plays a protective role against oxidative stress by restoring activity to proteins that have been inactivated by methionine oxidation. MSRA family specifically reduces the MetSO S-enantiomer. The polypeptide is Peptide methionine sulfoxide reductase A5 (MSRA5) (Oryza sativa subsp. japonica (Rice)).